The following is a 258-amino-acid chain: MLAIISPAKTLDFESAVKNFPVFQPHFTDYSEQLIEVCRKLSPQDLSSLMSISDKLAGLNVARFAEWTKIHNEDNSRPALFAFKGDVYTGLDADSLSEDDVIFAQSHLRMLSGLYGLLKPLDLMQPYRLEMGTKLANPKGKDLYAFWGNVITQAVQQAIDAQGDNVLVNLASDEYYKSVKENQLNAKIIKPVFLDNKNGKYKVISFYAKKARGLMCRYLIQNRLTDIEQLKEFDLGGYWFDSASSTETEFVFKRDINE.

This sequence belongs to the UPF0246 family.

The protein is UPF0246 protein NTHI1156 of Haemophilus influenzae (strain 86-028NP).